The following is a 103-amino-acid chain: Somatostatin-2 (103 aa).

An N-terminal signal peptide occupies residues Met1–Ser21. The propeptide occupies Gln22 to Glu87. Cys92 and Cys103 are oxidised to a cystine.

The protein belongs to the somatostatin family.

Its subcellular location is the secreted. Functionally, somatostatin inhibits the release of somatotropin. The sequence is that of Somatostatin-2 (sst2) from Pelophylax ridibundus (Marsh frog).